Reading from the N-terminus, the 311-residue chain is Malate dehydrogenase (311 aa).

NAD(+)-binding positions include G7 to G13 and D34. The substrate site is built by R81 and R87. NAD(+) contacts are provided by residues N94 and I117–N119. Substrate is bound by residues N119 and R153. Catalysis depends on H177, which acts as the Proton acceptor. M227 contributes to the NAD(+) binding site.

This sequence belongs to the LDH/MDH superfamily. MDH type 1 family. In terms of assembly, homodimer.

The catalysed reaction is (S)-malate + NAD(+) = oxaloacetate + NADH + H(+). Its function is as follows. Catalyzes the reversible oxidation of malate to oxaloacetate. This Aeromonas salmonicida (strain A449) protein is Malate dehydrogenase.